Consider the following 690-residue polypeptide: Translation initiation factor IF-2 (690 aa).

Positions 178–346 (PRPPVVTVMG…MILLVAEMNE (169 aa)) constitute a tr-type G domain. The G1 stretch occupies residues 187-194 (GHVDHGKT). 187 to 194 (GHVDHGKT) is a GTP binding site. The segment at 212-216 (GITQS) is G2. Positions 233–236 (DTPG) are G3. Residues 233-237 (DTPGH) and 287-290 (NKID) contribute to the GTP site. Residues 287–290 (NKID) form a G4 region. Positions 324–326 (SAR) are G5.

This sequence belongs to the TRAFAC class translation factor GTPase superfamily. Classic translation factor GTPase family. IF-2 subfamily.

It localises to the cytoplasm. In terms of biological role, one of the essential components for the initiation of protein synthesis. Protects formylmethionyl-tRNA from spontaneous hydrolysis and promotes its binding to the 30S ribosomal subunits. Also involved in the hydrolysis of GTP during the formation of the 70S ribosomal complex. In Thermotoga sp. (strain RQ2), this protein is Translation initiation factor IF-2.